The sequence spans 289 residues: Bis(5'-nucleosyl)-tetraphosphatase, symmetrical (289 aa).

This sequence belongs to the Ap4A hydrolase family.

The enzyme catalyses P(1),P(4)-bis(5'-adenosyl) tetraphosphate + H2O = 2 ADP + 2 H(+). Functionally, hydrolyzes diadenosine 5',5'''-P1,P4-tetraphosphate to yield ADP. This is Bis(5'-nucleosyl)-tetraphosphatase, symmetrical from Pseudomonas fluorescens (strain ATCC BAA-477 / NRRL B-23932 / Pf-5).